Reading from the N-terminus, the 142-residue chain is Protein CPn_0742/CP_0003/CPj0742/CpB0770 (142 aa).

Residues 115–142 (LHPTKESKRPKQKLSSTKKNKKKNWIPL) form a disordered region. The segment covering 124–142 (PKQKLSSTKKNKKKNWIPL) has biased composition (basic residues).

It belongs to the chlamydial CPn_0742/CT_635/TC_0003 family.

In Chlamydia pneumoniae (Chlamydophila pneumoniae), this protein is Protein CPn_0742/CP_0003/CPj0742/CpB0770.